We begin with the raw amino-acid sequence, 173 residues long: ATP synthase subunit b (173 aa).

The chain crosses the membrane as a helical span at residues 19–39 (IVWSLIILVIVAVFFYKFFMP).

It belongs to the ATPase B chain family. As to quaternary structure, F-type ATPases have 2 components, F(1) - the catalytic core - and F(0) - the membrane proton channel. F(1) has five subunits: alpha(3), beta(3), gamma(1), delta(1), epsilon(1). F(0) has three main subunits: a(1), b(2) and c(10-14). The alpha and beta chains form an alternating ring which encloses part of the gamma chain. F(1) is attached to F(0) by a central stalk formed by the gamma and epsilon chains, while a peripheral stalk is formed by the delta and b chains.

It is found in the cell membrane. In terms of biological role, f(1)F(0) ATP synthase produces ATP from ADP in the presence of a proton or sodium gradient. F-type ATPases consist of two structural domains, F(1) containing the extramembraneous catalytic core and F(0) containing the membrane proton channel, linked together by a central stalk and a peripheral stalk. During catalysis, ATP synthesis in the catalytic domain of F(1) is coupled via a rotary mechanism of the central stalk subunits to proton translocation. Its function is as follows. Component of the F(0) channel, it forms part of the peripheral stalk, linking F(1) to F(0). In Bifidobacterium longum (strain NCC 2705), this protein is ATP synthase subunit b.